We begin with the raw amino-acid sequence, 156 residues long: CASP-like protein 5C1 (156 aa).

Residues 1–21 (MENRERAGAGAVGSAGSLGLR) are Cytoplasmic-facing. The chain crosses the membrane as a helical span at residues 22-42 (VGQAVFSSASLLFMSVGVEFF). Topologically, residues 43–46 (SYTA) are extracellular. Residues 47 to 67 (FCFLVTIMGLVIPWSCTLAMI) form a helical membrane-spanning segment. Over 68-81 (DVYSILVGCPLRVP) the chain is Cytoplasmic. Residues 82 to 102 (GVMVIVVIGDWVLAILSLAAA) form a helical membrane-spanning segment. Residues 103–132 (SSSAAVIDLLLQFHGSHCSPRFCGRYQLSA) lie on the Extracellular side of the membrane. A helical transmembrane segment spans residues 133-153 (MMAFLSWFLTAASSLFNLWFI). The Cytoplasmic segment spans residues 154-156 (ASR).

The protein belongs to the Casparian strip membrane proteins (CASP) family. Homodimer and heterodimers.

The protein localises to the cell membrane. In Oryza sativa subsp. japonica (Rice), this protein is CASP-like protein 5C1.